A 465-amino-acid chain; its full sequence is MLMPGMEYSTVSKIYGPLMIVQGVKGVAYGEVVEIETESGEKRKGQVLEARQDMAIVQVFEGTRDLDIKTTRVRFTGETLKVPVSMDMLGRVFNGIGKPIDGGPEIIPEDRRDVHGAPLNPVARAYPRDFIQTGVSAIDGMNTLVRGQKLPIFSGSGLPHNMLAAQIARQAKVLGEEEQFAVVFAAMGITYEEANFFKKSFEETGAIERAVLFLNLADDPAIERIITPRMALTVAEYLAFDYDMQVLVILTDMTNYAEALREISAAREEVPGRRGYPGYMYTDLATIYERAGRVRGKKGSITQMPILTMPDDDITHPIPDLTGYITEGQIVLSRELYRKGIYPPIDVLPSLSRLMKDGIGKGRTRDDHPQLSQQLYAAYAEGRSLRDLVAVVGEEALSETDRKYLKFADRFEREFIAQRYDEDRSIEETLDLGWELLAELPESELKRVRKEYILKYHPKYRKREG.

The protein belongs to the ATPase alpha/beta chains family. As to quaternary structure, has multiple subunits with at least A(3), B(3), C, D, E, F, H, I and proteolipid K(x).

The protein localises to the cell membrane. Its function is as follows. Component of the A-type ATP synthase that produces ATP from ADP in the presence of a proton gradient across the membrane. The B chain is a regulatory subunit. The chain is A-type ATP synthase subunit B from Thermococcus onnurineus (strain NA1).